Here is a 97-residue protein sequence, read N- to C-terminus: Exodeoxyribonuclease 7 small subunit (97 aa).

A disordered region spans residues 1-22 (MAKTASPGATPPGNGTEPLPDN).

Belongs to the XseB family. As to quaternary structure, heterooligomer composed of large and small subunits.

It is found in the cytoplasm. It carries out the reaction Exonucleolytic cleavage in either 5'- to 3'- or 3'- to 5'-direction to yield nucleoside 5'-phosphates.. Bidirectionally degrades single-stranded DNA into large acid-insoluble oligonucleotides, which are then degraded further into small acid-soluble oligonucleotides. The protein is Exodeoxyribonuclease 7 small subunit of Burkholderia cenocepacia (strain HI2424).